Reading from the N-terminus, the 166-residue chain is Peroxynitrite isomerase Rv2717c (166 aa).

The short motif at 28 to 34 is the GXWXGXG element; the sequence is GTWRGQG. Heme b-binding residues include threonine 40 and histidine 158.

Belongs to the nitrobindin family. As to quaternary structure, homodimer. The cofactor is heme b.

The protein localises to the cytoplasm. The enzyme catalyses peroxynitrite = nitrate. The protein operates within nitrogen metabolism. In terms of biological role, heme-binding protein able to scavenge peroxynitrite and to protect free L-tyrosine against peroxynitrite-mediated nitration, by acting as a peroxynitrite isomerase that converts peroxynitrite to nitrate. Therefore, this protein likely plays a role in peroxynitrite sensing and in the detoxification of reactive nitrogen and oxygen species (RNS and ROS, respectively). Is able to bind nitric oxide (NO) in vitro, but may act as a sensor of peroxynitrite levels in vivo. In Arabidopsis thaliana (Mouse-ear cress), this protein is Peroxynitrite isomerase Rv2717c.